A 438-amino-acid polypeptide reads, in one-letter code: GTPase Der (438 aa).

EngA-type G domains follow at residues 4-168 (PIVA…PKGY) and 177-352 (IRIA…TNYS). GTP is bound by residues 10–17 (GRPNVGKS), 57–61 (DTGGI), 120–123 (NKID), 183–190 (GKPNVGKS), 230–234 (DTAGL), and 295–298 (NKWD). Residues 353–437 (KRISTGVLND…GIKMEFRERK (85 aa)) enclose the KH-like domain.

It belongs to the TRAFAC class TrmE-Era-EngA-EngB-Septin-like GTPase superfamily. EngA (Der) GTPase family. As to quaternary structure, associates with the 50S ribosomal subunit.

Its function is as follows. GTPase that plays an essential role in the late steps of ribosome biogenesis. The polypeptide is GTPase Der (Clostridium tetani (strain Massachusetts / E88)).